Consider the following 404-residue polypeptide: MSSGALFPSLVPGSRGSSSKYLVEFRAGKMSLKGSTVTPDKRKGLVYIQQTDDSLIHFCWKDRTSGSVEDDLIIFPDDCEFKRVSQCTTGRVYVLKFKAGSKRLFFWMQEPKTDKDEEYCRKLNEYLNNPPMPGALGGSGSGSHELSALGGEGGLQSLLGNMSHNQLMQLIGPTGLGGLGGLGALTGPGLASLLGSGGPTTSSSSSSSRSQSAAVTPSSTTSSTRTTSAPVAPAAAPATTPSPAVSSNDGASEATSPTQPIQLSDLQNILATMNVPATGEGGQQVDLASVLTPEIMAPILANAEVQERLTPYLPSGESLPQTADEIQNTLTSPQFQQALGMFSAALASGQLGPLMSQFGLPADAVDAANKGDIEAFAKAMQSTSSQKERESSEKKEEEEDMSLD.

In terms of domain architecture, Pru spans Ser-17–Pro-130. Residues Gly-195–Ser-247 are compositionally biased toward low complexity. Disordered regions lie at residues Gly-195 to Thr-258 and Phe-376 to Asp-404. The span at Asn-248–Thr-258 shows a compositional bias: polar residues. The region spanning Thr-278–Glu-390 is the DEUBAD domain. Residues Gln-386–Lys-395 are compositionally biased toward basic and acidic residues.

The protein belongs to the ADRM1 family. As to quaternary structure, component of the 19S proteasome regulatory particle complex. The 26S proteasome consists of a 20S core particle (CP) and two 19S regulatory subunits (RP).

It is found in the cytoplasm. It localises to the nucleus. Component of the 26S proteasome, a multiprotein complex involved in the ATP-dependent degradation of ubiquitinated proteins. This complex plays a key role in the maintenance of protein homeostasis by removing misfolded or damaged proteins, which could impair cellular functions, and by removing proteins whose functions are no longer required. Therefore, the proteasome participates in numerous cellular processes, including cell cycle progression, apoptosis, or DNA damage repair. Within the complex, functions as a proteasomal ubiquitin receptor. This chain is Proteasomal ubiquitin receptor ADRM1-A (adrm1-a), found in Xenopus laevis (African clawed frog).